The primary structure comprises 661 residues: UvrABC system protein C (661 aa).

The GIY-YIG domain occupies 26-105; that stretch reads AEPGCYLMRD…IKNHQPHFNV (80 aa). A UVR domain is found at 215 to 250; the sequence is DELQNLLQEQMHKYADRTDYESAARVRDQLQGLDQL.

The protein belongs to the UvrC family. As to quaternary structure, interacts with UvrB in an incision complex.

Its subcellular location is the cytoplasm. The UvrABC repair system catalyzes the recognition and processing of DNA lesions. UvrC both incises the 5' and 3' sides of the lesion. The N-terminal half is responsible for the 3' incision and the C-terminal half is responsible for the 5' incision. The chain is UvrABC system protein C from Synechococcus sp. (strain CC9902).